The primary structure comprises 304 residues: Tyrosine recombinase XerD (304 aa).

In terms of domain architecture, Core-binding (CB) spans 1–92 (MKARVLAKTW…VARGLHKFAL (92 aa)). In terms of domain architecture, Tyr recombinase spans 113–298 (HLPDTLSINE…TADSLREVWR (186 aa)). Catalysis depends on residues Arg156, Lys180, His250, Arg253, and His276. The active-site O-(3'-phospho-DNA)-tyrosine intermediate is Tyr285.

Belongs to the 'phage' integrase family. XerD subfamily. Forms a cyclic heterotetrameric complex composed of two molecules of XerC and two molecules of XerD.

The protein resides in the cytoplasm. In terms of biological role, site-specific tyrosine recombinase, which acts by catalyzing the cutting and rejoining of the recombining DNA molecules. The XerC-XerD complex is essential to convert dimers of the bacterial chromosome into monomers to permit their segregation at cell division. It also contributes to the segregational stability of plasmids. The polypeptide is Tyrosine recombinase XerD (Corynebacterium glutamicum (strain ATCC 13032 / DSM 20300 / JCM 1318 / BCRC 11384 / CCUG 27702 / LMG 3730 / NBRC 12168 / NCIMB 10025 / NRRL B-2784 / 534)).